The following is a 96-amino-acid chain: MAIRPLQDRVIVKRLEEERKTASGIVIPDTAAEKPDQGEVIAVGPGKKDDNGKSIPLDVKVGDKVLFGKYAGQAVKVNGEEVLVLREDDILGIVEA.

It belongs to the GroES chaperonin family. As to quaternary structure, heptamer of 7 subunits arranged in a ring. Interacts with the chaperonin GroEL.

The protein resides in the cytoplasm. Functionally, together with the chaperonin GroEL, plays an essential role in assisting protein folding. The GroEL-GroES system forms a nano-cage that allows encapsulation of the non-native substrate proteins and provides a physical environment optimized to promote and accelerate protein folding. GroES binds to the apical surface of the GroEL ring, thereby capping the opening of the GroEL channel. The chain is Co-chaperonin GroES from Methylobacillus flagellatus (strain ATCC 51484 / DSM 6875 / VKM B-1610 / KT).